The following is a 514-amino-acid chain: Probable lipid II flippase MurJ (514 aa).

The next 14 helical transmembrane spans lie at 3–23 (ILKSLISVGIMTLISRIFGFF), 25–45 (DVLIAHIFGASMFTDAFFIAF), 92–112 (ILVLTTFVILGIIFSDYIIFI), 130–150 (LLKIMFPYILFISLSSLCSSI), 157–177 (FFIPSLSSSLLNISIIVFSFF), 186–206 (IISLAWSVMIGGFFQLFYQFP), 245–265 (ISLIFNTIFSSLLHSGSISWI), 271–291 (LIEFPIGIIGVSLSTILFTSF), 315–335 (LILSLPISVILFMFSKPLVII), 354–374 (LELYSFGLVSFILVKILVSAF), 386–406 (ISILTLFLTQLMNPFLIFYFQ), 409–429 (GLALSCSIASWINFFLLYWKL), 448–468 (LLIAVLVMTFFLIFMLYFIPS), and 481–501 (LFTILSISGIVYLIALHFLGI).

This sequence belongs to the MurJ/MviN family.

Its subcellular location is the cell inner membrane. The protein operates within cell wall biogenesis; peptidoglycan biosynthesis. Its function is as follows. Involved in peptidoglycan biosynthesis. Transports lipid-linked peptidoglycan precursors from the inner to the outer leaflet of the cytoplasmic membrane. In Buchnera aphidicola subsp. Schizaphis graminum (strain Sg), this protein is Probable lipid II flippase MurJ.